The following is a 259-amino-acid chain: NAP1-related protein 1 (259 aa).

Basic and acidic residues predominate over residues 1–15; sequence MAAAEQKGKKPRTDG. The segment at 1–20 is disordered; sequence MAAAEQKGKKPRTDGAEAEP. A coiled-coil region spans residues 21–62; that stretch reads VDAALLQSIEKLQEIQDEIEKVNEEACDKVLELEQKYNEVRR. The disordered stretch occupies residues 228 to 259; it reads ELLDDDDEVSDDDDEEEDDEDQGEGEEDGEEN.

Belongs to the nucleosome assembly protein (NAP) family.

It is found in the nucleus. It localises to the cytoplasm. In terms of biological role, acts as a histone H2A/H2B chaperone in nucleosome assembly. The chain is NAP1-related protein 1 from Oryza sativa subsp. indica (Rice).